Reading from the N-terminus, the 370-residue chain is Pulmonary surfactant-associated protein B (370 aa).

A signal peptide spans 1 to 24 (MAKSHLPPWLLLLLLPTLCGPGTA). Positions 25-184 (VWATSPLACA…PHTQDLSAQR (160 aa)) are excised as a propeptide. One can recognise a Saposin A-type domain in the interval 26-66 (WATSPLACAQGPEFWCQSLEQALQCKALGHCLQEVWGHVGA). 3 consecutive Saposin B-type domains span residues 66–148 (ADDL…QPGS), 188–265 (PLPL…SSVD), and 284–359 (QDPE…VATL). 9 cysteine pairs are disulfide-bonded: Cys70–Cys144, Cys73–Cys138, Cys101–Cys113, Cys192–Cys261, Cys195–Cys255, Cys219–Cys230, Cys288–Cys355, Cys291–Cys349, and Cys314–Cys324. The propeptide occupies 264 to 370 (VDSIGQVPPT…PLQCIQSPHF (107 aa)). Asn300 carries an N-linked (GlcNAc...) asparagine glycan.

In terms of assembly, homodimer; disulfide-linked.

It localises to the secreted. Its subcellular location is the extracellular space. It is found in the surface film. In terms of biological role, pulmonary surfactant-associated proteins promote alveolar stability by lowering the surface tension at the air-liquid interface in the peripheral air spaces. SP-B increases the collapse pressure of palmitic acid to nearly 70 millinewtons per meter. In Oryctolagus cuniculus (Rabbit), this protein is Pulmonary surfactant-associated protein B (SFTPB).